Reading from the N-terminus, the 532-residue chain is Phosphoenolpyruvate carboxylase (532 aa).

This sequence belongs to the PEPCase type 2 family. As to quaternary structure, homotetramer. Mg(2+) is required as a cofactor.

The enzyme catalyses oxaloacetate + phosphate = phosphoenolpyruvate + hydrogencarbonate. In terms of biological role, catalyzes the irreversible beta-carboxylation of phosphoenolpyruvate (PEP) to form oxaloacetate (OAA), a four-carbon dicarboxylic acid source for the tricarboxylic acid cycle. The protein is Phosphoenolpyruvate carboxylase of Methanopyrus kandleri (strain AV19 / DSM 6324 / JCM 9639 / NBRC 100938).